Here is a 290-residue protein sequence, read N- to C-terminus: Light-independent protochlorophyllide reductase iron-sulfur ATP-binding protein (290 aa).

ATP-binding positions include 10–15 (GIGKST) and K39. S14 serves as a coordination point for Mg(2+). The [4Fe-4S] cluster site is built by C95 and C129. 180-181 (NR) is an ATP binding site.

This sequence belongs to the NifH/BchL/ChlL family. Homodimer. Protochlorophyllide reductase is composed of three subunits; ChlL, ChlN and ChlB. [4Fe-4S] cluster serves as cofactor.

The protein localises to the plastid. It localises to the chloroplast. The catalysed reaction is chlorophyllide a + oxidized 2[4Fe-4S]-[ferredoxin] + 2 ADP + 2 phosphate = protochlorophyllide a + reduced 2[4Fe-4S]-[ferredoxin] + 2 ATP + 2 H2O. Its pathway is porphyrin-containing compound metabolism; chlorophyll biosynthesis (light-independent). Its function is as follows. Component of the dark-operative protochlorophyllide reductase (DPOR) that uses Mg-ATP and reduced ferredoxin to reduce ring D of protochlorophyllide (Pchlide) to form chlorophyllide a (Chlide). This reaction is light-independent. The L component serves as a unique electron donor to the NB-component of the complex, and binds Mg-ATP. This chain is Light-independent protochlorophyllide reductase iron-sulfur ATP-binding protein, found in Chaetosphaeridium globosum (Charophycean green alga).